Consider the following 406-residue polypeptide: Argininosuccinate synthase (406 aa).

ATP is bound by residues 11–19 and Ala38; that span reads AYSGGLDTS. The L-citrulline site is built by Tyr91 and Ser96. Residue Gly121 participates in ATP binding. 3 residues coordinate L-aspartate: Thr123, Asn127, and Asp128. An L-citrulline-binding site is contributed by Asn127. L-citrulline is bound by residues Arg131, Ser181, Ser190, Glu266, and Tyr278.

Belongs to the argininosuccinate synthase family. Type 1 subfamily. In terms of assembly, homotetramer.

The protein resides in the cytoplasm. The catalysed reaction is L-citrulline + L-aspartate + ATP = 2-(N(omega)-L-arginino)succinate + AMP + diphosphate + H(+). It functions in the pathway amino-acid biosynthesis; L-arginine biosynthesis; L-arginine from L-ornithine and carbamoyl phosphate: step 2/3. This is Argininosuccinate synthase from Campylobacter curvus (strain 525.92).